A 161-amino-acid polypeptide reads, in one-letter code: Phosphopantetheine adenylyltransferase (161 aa).

Thr10 is a substrate binding site. ATP-binding positions include 10-11 (TF) and His18. Lys42, Leu74, and Arg88 together coordinate substrate. ATP-binding positions include 89 to 91 (GVR), Glu99, and 123 to 129 (YIHISST).

Belongs to the bacterial CoaD family. In terms of assembly, homohexamer. Mg(2+) serves as cofactor.

The protein resides in the cytoplasm. The enzyme catalyses (R)-4'-phosphopantetheine + ATP + H(+) = 3'-dephospho-CoA + diphosphate. Its pathway is cofactor biosynthesis; coenzyme A biosynthesis; CoA from (R)-pantothenate: step 4/5. Its function is as follows. Reversibly transfers an adenylyl group from ATP to 4'-phosphopantetheine, yielding dephospho-CoA (dPCoA) and pyrophosphate. The sequence is that of Phosphopantetheine adenylyltransferase from Aquifex aeolicus (strain VF5).